The following is a 612-amino-acid chain: Elongation factor 4 (612 aa).

One can recognise a tr-type G domain in the interval 11-193 (KHIRNFSIVA…EIVKKVPAPN (183 aa)). GTP-binding positions include 23 to 28 (DHGKST) and 140 to 143 (NKID).

This sequence belongs to the TRAFAC class translation factor GTPase superfamily. Classic translation factor GTPase family. LepA subfamily.

Its subcellular location is the cell membrane. The catalysed reaction is GTP + H2O = GDP + phosphate + H(+). Functionally, required for accurate and efficient protein synthesis under certain stress conditions. May act as a fidelity factor of the translation reaction, by catalyzing a one-codon backward translocation of tRNAs on improperly translocated ribosomes. Back-translocation proceeds from a post-translocation (POST) complex to a pre-translocation (PRE) complex, thus giving elongation factor G a second chance to translocate the tRNAs correctly. Binds to ribosomes in a GTP-dependent manner. This is Elongation factor 4 from Lactobacillus gasseri (strain ATCC 33323 / DSM 20243 / BCRC 14619 / CIP 102991 / JCM 1131 / KCTC 3163 / NCIMB 11718 / NCTC 13722 / AM63).